Reading from the N-terminus, the 247-residue chain is 3-deoxy-manno-octulosonate cytidylyltransferase (247 aa).

The protein belongs to the KdsB family.

It localises to the cytoplasm. The enzyme catalyses 3-deoxy-alpha-D-manno-oct-2-ulosonate + CTP = CMP-3-deoxy-beta-D-manno-octulosonate + diphosphate. It participates in nucleotide-sugar biosynthesis; CMP-3-deoxy-D-manno-octulosonate biosynthesis; CMP-3-deoxy-D-manno-octulosonate from 3-deoxy-D-manno-octulosonate and CTP: step 1/1. Its pathway is bacterial outer membrane biogenesis; lipopolysaccharide biosynthesis. Activates KDO (a required 8-carbon sugar) for incorporation into bacterial lipopolysaccharide in Gram-negative bacteria. The polypeptide is 3-deoxy-manno-octulosonate cytidylyltransferase (Chlorobium limicola (strain DSM 245 / NBRC 103803 / 6330)).